Here is a 301-residue protein sequence, read N- to C-terminus: Acetylglutamate kinase (301 aa).

Substrate contacts are provided by residues 68–69 (GG), Arg90, and Asn195.

Belongs to the acetylglutamate kinase family. ArgB subfamily.

Its subcellular location is the cytoplasm. The catalysed reaction is N-acetyl-L-glutamate + ATP = N-acetyl-L-glutamyl 5-phosphate + ADP. The protein operates within amino-acid biosynthesis; L-arginine biosynthesis; N(2)-acetyl-L-ornithine from L-glutamate: step 2/4. Its function is as follows. Catalyzes the ATP-dependent phosphorylation of N-acetyl-L-glutamate. The chain is Acetylglutamate kinase from Pseudomonas paraeruginosa (strain DSM 24068 / PA7) (Pseudomonas aeruginosa (strain PA7)).